The following is a 375-amino-acid chain: Lipid droplet hydrolase 1 (375 aa).

The AB hydrolase-1 domain maps to 88–358 (VFVFVPGLAG…CSHNLCFDRP (271 aa)). The active-site Charge relay system is Ser177. Residues 373 to 375 (SKL) carry the Microbody targeting signal motif.

Belongs to the AB hydrolase superfamily. Lipase family.

It is found in the lipid droplet. It catalyses the reaction a triacylglycerol + H2O = a diacylglycerol + a fatty acid + H(+). Functionally, serine hydrolase required for the maintenance of steady state level of non-polar and polar lipids of lipid droplets and thus plays a role in maintaining the lipids homeostasis. Exhibits both esterase and triacylglycerol lipase activity. The polypeptide is Lipid droplet hydrolase 1 (Saccharomyces cerevisiae (strain ATCC 204508 / S288c) (Baker's yeast)).